A 125-amino-acid chain; its full sequence is Fluoride-specific ion channel FluC (125 aa).

4 helical membrane passes run 5–25 (IFLV…VSLL), 33–53 (IFPL…GILV), 66–86 (VKIF…SFSL), and 100–120 (LVLY…LGYI). Na(+)-binding residues include glycine 76 and threonine 79.

It belongs to the fluoride channel Fluc/FEX (TC 1.A.43) family.

The protein resides in the cell inner membrane. It carries out the reaction fluoride(in) = fluoride(out). Its activity is regulated as follows. Na(+) is not transported, but it plays an essential structural role and its presence is essential for fluoride channel function. Functionally, fluoride-specific ion channel. Important for reducing fluoride concentration in the cell, thus reducing its toxicity. This is Fluoride-specific ion channel FluC from Azobacteroides pseudotrichonymphae genomovar. CFP2.